A 396-amino-acid chain; its full sequence is MAKAKFERNKPHVNVGTIGHVDHGKTTLTAAIATICAKTYGGEAKDYSQIDSAPEEKARGITINTSHVEYDSPIRHYAHVDCPGHADYVKNMITGAAQMDGAILVCAATDGPMPQTREHILLSRQVGVPYIVVFLNKCDLVDDEELLELVEMEVRELLSTYDFPGDDTPVIRGSALKALEGDAGQYGESSVLALVEALDTYIPEPERAIDKAFLMPIEDVFSISGRGTVVTGRVEAGIVKVGESVEIVGIRDTQTTTVTGVEMFRKLLDEGRAGENCGVLLRGTKREDVQRGQVLAKPGTIKPHTKFDAEVYVLSKEEGGRHTPFLNGYRPQFYFRTTDVTGAIQLKEGVEMVMPGDNVEMSVELIHPIAMDPGLRFAIREGGRTVGAGVVAKVTA.

The region spanning 10 to 206 is the tr-type G domain; sequence KPHVNVGTIG…ALDTYIPEPE (197 aa). A G1 region spans residues 19 to 26; sequence GHVDHGKT. 19-26 is a GTP binding site; it reads GHVDHGKT. Thr-26 serves as a coordination point for Mg(2+). Residues 60–64 are G2; sequence GITIN. Positions 81-84 are G3; the sequence is DCPG. Residues 81–85 and 136–139 contribute to the GTP site; these read DCPGH and NKCD. A G4 region spans residues 136 to 139; that stretch reads NKCD. The tract at residues 174–176 is G5; the sequence is SAL.

Belongs to the TRAFAC class translation factor GTPase superfamily. Classic translation factor GTPase family. EF-Tu/EF-1A subfamily. In terms of assembly, monomer.

It localises to the cytoplasm. The enzyme catalyses GTP + H2O = GDP + phosphate + H(+). Its function is as follows. GTP hydrolase that promotes the GTP-dependent binding of aminoacyl-tRNA to the A-site of ribosomes during protein biosynthesis. The chain is Elongation factor Tu from Acinetobacter baylyi (strain ATCC 33305 / BD413 / ADP1).